The following is a 1259-amino-acid chain: MEAKKDSARRLRSIDRTRYAEHEDLSDVEDMVSIRGFSLEQKVSCNAYRGNFVRYMEGKDFTYEYVQREALQTPLLFSTKEGLGIKMPEQDFTVRDVKLLVGSRRVVDVMDVNTQKSIDMSMSQFVRYYETPEMEREKLYNVISLEFSHTKLERVVKRPTVVDAVDWVDNMWPRHLKEQQKESTNVIAEMKYPKVKKYCLMSVKGCYTDFHIDFGGTSVWYHVFRGGKVFWLIPPTGHNLQLYEEWLLSGKQTDIFLGDRSEGCQRIELKQGQTFFIPSGWIHAVYTPADSLVFGGNILHSFNIPMQLRVFEIEDRTRVNAKFRYPFYYEMCWYVLERYVCTLTKRSHLIKEYQRESMITDRKPSLDSHSSDSWLEMEEESCDIHIKEEKGNLVEKPSKQSGDESSTTNSTHSNGKDAAEKKQKATLMQQLKRTLSNDSDESSKSIVHSDFPKTPTGSPATDMPCKLTHLTEFELKGLKALVEKLESLPENKKCVPEGIEDPQALLEDMKTVLKEHADDDNNLAISGVPVVMWPKKPSKNRAVGRPKGKIASSPAVKLSANRTSAGARRRRTRCRKCEACLRTECGECHFCKDMKKFGGPGRMKQSCIMRQCIAPVLPHTAVCLVCGEAGKEDCVEGQEAKFNVMLMECSICNEIIHPGCLKTKESDGVVNDELPNCWECPKCNHAGKTGKVYKQKRGPGFKYASNLPGSLLKEQKVNRDNKELTEIVKKKVEREETPKQIPEEQPKKKPTEGIIKKKPEDGHVRKKRKFEKPPDPSVRKRLKLVKEEKLLRKKRRSWKTPDERAMMAKTLRRIKQEPDDDLTEAAPKAKESDQSRSSSPTAGPSTEGSEPKEKKKIRRKRRVSNKELSKELSKELNQEIQKTESSLASENHHPIKSEPESDNEESKKCISTNGERMHNFSKGLNGTPKELRHELFPSLKTTPRANNRPPPSLSPPKCMQMERHVIRPPPISPPPDSLPLANGAAHVMQREVWMAIFSYLSHRDLCICMRICRTWNRWCCDKRLWTQIDLNRCKSITPLMLSGIIRRQPASLDLSWTNISKKQLSWLINRLPALRDLNLSGCSWIAVSALCSSCCPLLRTLNVQWVEGLKDAQMRDLLSPPTDNRPGQIDNRSKLRNITELRLAGLDITDASLRLMIRHMPLLAKLDLSYCNHVTDQSINLLTAVGTSTRDTLLEMNLSDCNNVTDQCLTFFKRCGNICLIDLRFCKQVSKESCEQFIAEMSVIVQFGQTEEKLLQKVS.

Residues 147–315 (FSHTKLERVV…MQLRVFEIED (169 aa)) form the JmjC domain. T208 provides a ligand contact to substrate. 2 residues coordinate Fe cation: H211 and D213. K228 serves as a coordination point for substrate. H283 provides a ligand contact to Fe cation. Residues 388 to 402 (EEKGNLVEKPSKQSG) show a composition bias toward basic and acidic residues. 2 disordered regions span residues 388-463 (EEKG…ATDM) and 536-562 (KPSKNRAVGRPKGKIASSPAVKLSANR). The span at 403 to 413 (DESSTTNSTHS) shows a compositional bias: polar residues. A compositionally biased stretch (basic and acidic residues) spans 414-423 (NGKDAAEKKQ). The segment covering 426–437 (TLMQQLKRTLSN) has biased composition (polar residues). Positions 536 to 548 (KPSKNRAVGRPKG) are enriched in basic residues. The segment at 567–613 (ARRRRTRCRKCEACLRTECGECHFCKDMKKFGGPGRMKQSCIMRQCI) adopts a CXXC-type zinc-finger fold. C574, C577, C580, C585, C588, C591, C607, C612, C623, C626, C649, C652, H657, C660, C680, and C683 together coordinate Zn(2+). Residues 620–686 (TAVCLVCGEA…CWECPKCNHA (67 aa)) form a PHD-type zinc finger. Basic and acidic residues-rich tracts occupy residues 729-763 (KKKVEREETPKQIPEEQPKKKPTEGIIKKKPEDGH) and 771-790 (EKPPDPSVRKRLKLVKEEKL). The disordered stretch occupies residues 729-958 (KKKVEREETP…PPPSLSPPKC (230 aa)). Polar residues predominate over residues 835 to 848 (SRSSSPTAGPSTEG). A compositionally biased stretch (basic residues) spans 854 to 863 (KKKIRRKRRV). The span at 864–877 (SNKELSKELSKELN) shows a compositional bias: basic and acidic residues. Residues 864 to 891 (SNKELSKELSKELNQEIQKTESSLASEN) adopt a coiled-coil conformation. Residues 878-889 (QEIQKTESSLAS) are compositionally biased toward polar residues. Basic and acidic residues predominate over residues 890–908 (ENHHPIKSEPESDNEESKK). The F-box domain occupies 985–1030 (AHVMQREVWMAIFSYLSHRDLCICMRICRTWNRWCCDKRLWTQIDL). 5 LRR repeats span residues 1056–1081 (WTNISKKQLSWLINRLPALRDLNLSG), 1082–1105 (CSWIAVSALCSSCCPLLRTLNVQW), 1145–1170 (GLDITDASLRLMIRHMPLLAKLDLSY), 1171–1200 (CNHVTDQSINLLTAVGTSTRDTLLEMNLSD), and 1201–1225 (CNNVTDQCLTFFKRCGNICLIDLRF).

This sequence belongs to the JHDM1 histone demethylase family. Requires Fe(2+) as cofactor.

The protein resides in the nucleus. The protein localises to the nucleolus. It is found in the chromosome. It catalyses the reaction N(6),N(6)-dimethyl-L-lysyl(36)-[histone H3] + 2 2-oxoglutarate + 2 O2 = L-lysyl(36)-[histone H3] + 2 formaldehyde + 2 succinate + 2 CO2. Its activity is regulated as follows. Histone demethylase activity is inhibited by fumarate. Functionally, histone demethylase that demethylates 'Lys-4' and 'Lys-36' of histone H3, thereby playing a central role in histone code. Preferentially demethylates trimethylated H3 'Lys-4' and dimethylated H3 'Lys-36' residue while it has weak or no activity for mono- and tri-methylated H3 'Lys-36'. Preferentially binds the transcribed region of ribosomal RNA and represses the transcription of ribosomal RNA genes which inhibits cell growth and proliferation. In Xenopus laevis (African clawed frog), this protein is Lysine-specific demethylase 2B (kdm2b).